A 329-amino-acid polypeptide reads, in one-letter code: GTP 3',8-cyclase (329 aa).

In terms of domain architecture, Radical SAM core spans alanine 8–alanine 234. Arginine 17 serves as a coordination point for GTP. The [4Fe-4S] cluster site is built by cysteine 24 and cysteine 28. Tyrosine 30 serves as a coordination point for S-adenosyl-L-methionine. [4Fe-4S] cluster is bound at residue cysteine 31. Residue arginine 68 coordinates GTP. Glycine 72 is an S-adenosyl-L-methionine binding site. A GTP-binding site is contributed by threonine 99. Residue serine 123 participates in S-adenosyl-L-methionine binding. Lysine 160 is a GTP binding site. Residue methionine 194 participates in S-adenosyl-L-methionine binding. [4Fe-4S] cluster-binding residues include cysteine 257 and cysteine 260. Arginine 262 to arginine 264 contacts GTP. A [4Fe-4S] cluster-binding site is contributed by cysteine 274.

It belongs to the radical SAM superfamily. MoaA family. Monomer and homodimer. It depends on [4Fe-4S] cluster as a cofactor.

It catalyses the reaction GTP + AH2 + S-adenosyl-L-methionine = (8S)-3',8-cyclo-7,8-dihydroguanosine 5'-triphosphate + 5'-deoxyadenosine + L-methionine + A + H(+). It functions in the pathway cofactor biosynthesis; molybdopterin biosynthesis. Functionally, catalyzes the cyclization of GTP to (8S)-3',8-cyclo-7,8-dihydroguanosine 5'-triphosphate. The protein is GTP 3',8-cyclase of Salmonella heidelberg (strain SL476).